Reading from the N-terminus, the 425-residue chain is Adenylosuccinate synthetase (425 aa).

Residues 12–18 (GDEGKGK) and 40–42 (GHT) each bind GTP. Asp13 acts as the Proton acceptor in catalysis. Residues Asp13 and Gly40 each contribute to the Mg(2+) site. IMP contacts are provided by residues 13–16 (DEGK), 38–41 (NAGH), Thr126, Arg140, Gln221, Thr236, and Arg300. Residue His41 is the Proton donor of the active site. 296–302 (ATTGRPR) provides a ligand contact to substrate. Residues Arg302, 328-330 (KLD), and 410-412 (STG) contribute to the GTP site.

It belongs to the adenylosuccinate synthetase family. In terms of assembly, homodimer. Requires Mg(2+) as cofactor.

The protein resides in the cytoplasm. It carries out the reaction IMP + L-aspartate + GTP = N(6)-(1,2-dicarboxyethyl)-AMP + GDP + phosphate + 2 H(+). The protein operates within purine metabolism; AMP biosynthesis via de novo pathway; AMP from IMP: step 1/2. Plays an important role in the de novo pathway of purine nucleotide biosynthesis. Catalyzes the first committed step in the biosynthesis of AMP from IMP. This is Adenylosuccinate synthetase from Thermodesulfovibrio yellowstonii (strain ATCC 51303 / DSM 11347 / YP87).